A 550-amino-acid chain; its full sequence is Eukaryotic translation initiation factor 3 subunit L (550 aa).

The interval 1–20 (MVRDSFDGGHTGDPERDLAY) is disordered. The 195-residue stretch at 309 to 503 (EATKIFVNCL…IDDSTTDLDF (195 aa)) folds into the PCI domain.

The protein belongs to the eIF-3 subunit L family. As to quaternary structure, component of the eukaryotic translation initiation factor 3 (eIF-3) complex.

It is found in the cytoplasm. Component of the eukaryotic translation initiation factor 3 (eIF-3) complex, which is involved in protein synthesis of a specialized repertoire of mRNAs and, together with other initiation factors, stimulates binding of mRNA and methionyl-tRNAi to the 40S ribosome. The eIF-3 complex specifically targets and initiates translation of a subset of mRNAs involved in cell proliferation. This Brugia malayi (Filarial nematode worm) protein is Eukaryotic translation initiation factor 3 subunit L.